A 201-amino-acid chain; its full sequence is 3-isopropylmalate dehydratase small subunit (201 aa).

The protein belongs to the LeuD family. LeuD type 1 subfamily. Heterodimer of LeuC and LeuD.

The catalysed reaction is (2R,3S)-3-isopropylmalate = (2S)-2-isopropylmalate. Its pathway is amino-acid biosynthesis; L-leucine biosynthesis; L-leucine from 3-methyl-2-oxobutanoate: step 2/4. Functionally, catalyzes the isomerization between 2-isopropylmalate and 3-isopropylmalate, via the formation of 2-isopropylmaleate. This is 3-isopropylmalate dehydratase small subunit from Nitrobacter hamburgensis (strain DSM 10229 / NCIMB 13809 / X14).